The sequence spans 148 residues: Snaclec stejaggregin-A subunit beta-2 (148 aa).

The signal sequence occupies residues 1–23 (MGQFIFVSFGLLVVLLSLSGAGA). A disulfide bridge links C27 with C38. One can recognise a C-type lectin domain in the interval 34-145 (YDLYCYKVFK…CSRTHYVVCK (112 aa)). N-linked (GlcNAc...) asparagine glycans are attached at residues N47 and N78. 2 disulfide bridges follow: C55/C144 and C121/C136.

It belongs to the snaclec family. Heteromultimer; disulfide-linked. As to expression, expressed by the venom gland.

The protein resides in the secreted. Its function is as follows. Interferes with one step of hemostasis (modulation of platelet aggregation, or coagulation cascade, for example). The chain is Snaclec stejaggregin-A subunit beta-2 from Trimeresurus stejnegeri (Chinese green tree viper).